Consider the following 297-residue polypeptide: ClpXP adapter protein SpxH (297 aa).

This sequence belongs to the SpxH family. As to quaternary structure, interacts with Spx.

The protein localises to the cytoplasm. Adapter protein required for efficient degradation of Spx by ClpXP under non-stress conditions. Interaction with Spx stabilizes Spx and exposes the C-terminus of Spx for recognition and proteolysis by ClpXP. This Bacillus cereus (strain ZK / E33L) protein is ClpXP adapter protein SpxH.